The following is a 235-amino-acid chain: Hydroxyacylglutathione hydrolase (235 aa).

The Zn(2+) site is built by histidine 53, histidine 55, aspartate 57, histidine 58, histidine 109, aspartate 127, and histidine 165.

The protein belongs to the metallo-beta-lactamase superfamily. Glyoxalase II family. In terms of assembly, monomer. The cofactor is Zn(2+).

The enzyme catalyses an S-(2-hydroxyacyl)glutathione + H2O = a 2-hydroxy carboxylate + glutathione + H(+). The protein operates within secondary metabolite metabolism; methylglyoxal degradation; (R)-lactate from methylglyoxal: step 2/2. Its function is as follows. Thiolesterase that catalyzes the hydrolysis of S-D-lactoyl-glutathione to form glutathione and D-lactic acid. The chain is Hydroxyacylglutathione hydrolase from Actinobacillus pleuropneumoniae serotype 5b (strain L20).